A 909-amino-acid chain; its full sequence is MSQSDPLNVVSRILNKISKDNFQVLIDQLVSKCQLLDKNESTLFINNIFEKVVEEPSSSSYYIQIINKIQPIFQQNFSIGVGNKLVENFNKRYQILTDQINSNEETFDFNSSKQSFLNLCKFMGECYYTLPSSFLVDVVNNHLPQVTKETADDMTLQQLMEIEIIATSFTSAGKTIESMGGFSSKHENNKTHNNNNNNNNHDHDDDDHDEEDNENNYENTTSTTNNINNNNIQSRENDLHFKGIQKALEDATSVLSFLIENRQLLPPRVRFMVKNLFELKNNKWIIPKAINDDLNAQREVVKVATNHGKTISKSLSEKCDDDSTLNTIFWKSFFQALGIQNYKILRQLMLDDKSNISPSSTSPTIPLSPFLRRSMNITSPSQFNLNNCNNNNNSININNNNMDIDASFDLNDGLMESSSNNNNSNSQLQFSLSSSSGIKDNHNVPTIDLNTISSNNNQQINLPSGFLSPKVARSNSPSLSSVVKQPQSQQNNNNNNNNNNNNTTITTTTSSNNNINNNNNNNNNNKIKESPELSSAPDSNLSVIVSIIDSKIWTPQKEIWKKKIMNKIIPMKSILKKPQKIEILAAIWQNMCDNNYEYGSYLDLCLNLIKMDEGDISPLYSLDGGNVPPVKPYQQSAQPPPPPPSSSSSSAQQPPNEPVNPLLNKLKGPNRRSSMATLQMKPSGISEARRSSISVPFELNRRGSLSGDIPSYCPPAPKLKSTPTLKSTPAIVQNGGSITSTSSSSSSSSSSSSSTTKNIHPTSESKKQPIAKKHKPDLDSFKDVLISSLQDDFALKMFVKKRSLTTYMELLKDLYREFIIEIPLLLKCISLVHNGLYELTDEECTMLFDLEEMAQEQQNLEKQNDQQQNLLTQNNQIFQWKTNTWEEKPQTPPPPPTSYFDLGSDVFVL.

An MIF4G domain is found at 7 to 283 (LNVVSRILNK…KNLFELKNNK (277 aa)). 5 disordered regions span residues 178–232 (SMGG…NNNI), 415–439 (MESS…SGIK), 460–537 (INLP…SSAP), 627–689 (VPPV…SEAR), and 704–774 (SLSG…AKKH). Over residues 204-215 (DDDDHDEEDNEN) the composition is skewed to acidic residues. Low complexity-rich tracts occupy residues 216 to 231 (NYEN…NNNN) and 417 to 436 (SSSN…SSSS). Polar residues predominate over residues 473–490 (RSNSPSLSSVVKQPQSQQ). Low complexity predominate over residues 491–525 (NNNNNNNNNNNNTTITTTTSSNNNINNNNNNNNNN). Over residues 721-738 (STPTLKSTPAIVQNGGSI) the composition is skewed to polar residues. A compositionally biased stretch (low complexity) spans 739-756 (TSTSSSSSSSSSSSSSTT). A coiled-coil region spans residues 845 to 877 (TMLFDLEEMAQEQQNLEKQNDQQQNLLTQNNQI).

Functionally, plays as essential role in regulating terminal differentiation. The polypeptide is Yellow mounds protein A (yelA) (Dictyostelium discoideum (Social amoeba)).